We begin with the raw amino-acid sequence, 150 residues long: Deoxyuridine 5'-triphosphate nucleotidohydrolase (150 aa).

Substrate-binding positions include 69 to 71, asparagine 82, and 86 to 88; these read RSG and LID.

Belongs to the dUTPase family. Requires Mg(2+) as cofactor.

It catalyses the reaction dUTP + H2O = dUMP + diphosphate + H(+). Its pathway is pyrimidine metabolism; dUMP biosynthesis; dUMP from dCTP (dUTP route): step 2/2. In terms of biological role, this enzyme is involved in nucleotide metabolism: it produces dUMP, the immediate precursor of thymidine nucleotides and it decreases the intracellular concentration of dUTP so that uracil cannot be incorporated into DNA. This is Deoxyuridine 5'-triphosphate nucleotidohydrolase from Chromobacterium violaceum (strain ATCC 12472 / DSM 30191 / JCM 1249 / CCUG 213 / NBRC 12614 / NCIMB 9131 / NCTC 9757 / MK).